A 455-amino-acid chain; its full sequence is Serine--tRNA ligase (455 aa).

Residue 252-254 coordinates L-serine; the sequence is TAE. ATP-binding positions include 283–285 and Val-299; that span reads RKE. Residue Glu-306 coordinates L-serine. 370–373 lines the ATP pocket; sequence EVVS. Position 406 (Thr-406) interacts with L-serine.

The protein belongs to the class-II aminoacyl-tRNA synthetase family. Type-1 seryl-tRNA synthetase subfamily. As to quaternary structure, homodimer. The tRNA molecule binds across the dimer.

Its subcellular location is the cytoplasm. The enzyme catalyses tRNA(Ser) + L-serine + ATP = L-seryl-tRNA(Ser) + AMP + diphosphate + H(+). It catalyses the reaction tRNA(Sec) + L-serine + ATP = L-seryl-tRNA(Sec) + AMP + diphosphate + H(+). Its pathway is aminoacyl-tRNA biosynthesis; selenocysteinyl-tRNA(Sec) biosynthesis; L-seryl-tRNA(Sec) from L-serine and tRNA(Sec): step 1/1. Catalyzes the attachment of serine to tRNA(Ser). Is also able to aminoacylate tRNA(Sec) with serine, to form the misacylated tRNA L-seryl-tRNA(Sec), which will be further converted into selenocysteinyl-tRNA(Sec). The protein is Serine--tRNA ligase of Pyrococcus abyssi (strain GE5 / Orsay).